The sequence spans 166 residues: Ribosome maturation factor RimM (166 aa).

The 73-residue stretch at 94 to 166 folds into the PRC barrel domain; the sequence is EDEFYITDLN…AILNYKRDEL (73 aa).

This sequence belongs to the RimM family. As to quaternary structure, binds ribosomal protein uS19.

The protein resides in the cytoplasm. Functionally, an accessory protein needed during the final step in the assembly of 30S ribosomal subunit, possibly for assembly of the head region. Essential for efficient processing of 16S rRNA. May be needed both before and after RbfA during the maturation of 16S rRNA. It has affinity for free ribosomal 30S subunits but not for 70S ribosomes. The sequence is that of Ribosome maturation factor RimM from Rickettsia bellii (strain RML369-C).